A 924-amino-acid polypeptide reads, in one-letter code: DNA repair and recombination protein RDH54 (924 aa).

The span at 1–10 (MQIPKYENKP) shows a compositional bias: basic and acidic residues. Disordered stretches follow at residues 1-21 (MQIP…GSNK) and 155-183 (EALS…NDGG). The segment covering 168–178 (TTSTTETVPST) has biased composition (low complexity). A Helicase ATP-binding domain is found at 299–487 (LENDSDISGC…FTIIDFINPG (189 aa)). An ATP-binding site is contributed by 346-353 (IPLTGLCK). Residues 472-475 (NDLN) carry the DEGH box motif. K615 is covalently cross-linked (Glycyl lysine isopeptide (Lys-Gly) (interchain with G-Cter in ubiquitin)). Positions 631-790 (KLRVLMTLLE…DSEMRNKESS (160 aa)) constitute a Helicase C-terminal domain.

This sequence belongs to the SNF2/RAD54 helicase family. In terms of assembly, interacts with RAD51 and DMC1.

It localises to the nucleus. It carries out the reaction ATP + H2O = ADP + phosphate + H(+). In terms of biological role, involved in the recombinational repair of double-strand breaks (DSB) in DNA during mitosis and meiosis. Has DNA dependent ATPase activity. Promotes D-loop (displacement loop) formation with RAD51 recombinase. Modifies the topology of double-stranded DNA during the D-loop reaction to facilitate the invasion of the homologous duplex molecule by the initiating single-stranded DNA substrate. Required for adaptation from G2/M checkpoint arrest induced by a double strand break, by participating in monitoring the extent of single-stranded DNA produced by resection of DNA ends. This role is distinct from its roles in recombination. Promotes colocalization of RAD51 and DMC1 during meiotic recombination. Involved in crossover interference. This chain is DNA repair and recombination protein RDH54 (RDH54), found in Saccharomyces cerevisiae (strain YJM789) (Baker's yeast).